The primary structure comprises 78 residues: U-scoloptoxin(13)-Er1a (78 aa).

A signal peptide spans 1–24 (MFPSWSTTFVLCMGLCSLMNGALA).

The protein belongs to the scoloptoxin-13 family. In terms of processing, contains 4 disulfide bonds. As to expression, expressed by the venom gland.

It is found in the secreted. The chain is U-scoloptoxin(13)-Er1a from Ethmostigmus rubripes (Giant centipede).